The primary structure comprises 574 residues: Arginine--tRNA ligase (574 aa).

Residues 121–131 (PNIAKEMHIGH) carry the 'HIGH' region motif.

It belongs to the class-I aminoacyl-tRNA synthetase family. Monomer.

Its subcellular location is the cytoplasm. The catalysed reaction is tRNA(Arg) + L-arginine + ATP = L-arginyl-tRNA(Arg) + AMP + diphosphate. The polypeptide is Arginine--tRNA ligase (Buchnera aphidicola subsp. Acyrthosiphon pisum (strain Tuc7)).